Here is a 181-residue protein sequence, read N- to C-terminus: MNGFSTEEDSRDGPPAQAAPFFGQTCCLIDGGERCPRPAGNASFSKRVQKSISQKKLKLDIDKNVRHLYICDFHKNYIQSVRNKRKRKTSDDGGDSPEHETDIPEVDLFQLQVNTLRRYKRYYKLQTRPGLNKAQLAETVSRHFRNIPVNEKETLAYFIYMVKSNRSRLDQKSESSKQLEA.

2 disulfide bridges follow: Cys26-Cys27 and Cys35-Cys71. The Atypical zinc finger occupies 26 to 74 (CCLIDGGERCPRPAGNASFSKRVQKSISQKKLKLDIDKNVRHLYICDFH). A disordered region spans residues 82–103 (RNKRKRKTSDDGGDSPEHETDI). The Nuclear localization signal (NLS) motif lies at 83 to 88 (NKRKRK). Residues 85 to 87 (RKR) form an important for DNA and phosphoinositide binding region.

The protein belongs to the SAP30 family. In terms of assembly, interacts with components of the histone deacetylase complex sin3a, hdac1 and hdac2. Binds histones and nucleosomes.

Its subcellular location is the nucleus. It localises to the nucleolus. Functionally, functions as a transcription repressor, probably via its interaction with histone deacetylase complexes. Involved in the functional recruitment of the class 1 Sin3-histone deacetylase complex (HDAC) to the nucleolus. Binds DNA, apparently without sequence-specificity, and bends bound double-stranded DNA. Binds phosphoinositol phosphates (phosphoinositol 3-phosphate, phosphoinositol 4-phosphate and phosphoinositol 5-phosphate) via the same basic sequence motif that mediates DNA binding and nuclear import. The protein is Histone deacetylase complex subunit SAP30L-A (sap30l-a) of Xenopus laevis (African clawed frog).